We begin with the raw amino-acid sequence, 471 residues long: Mannose-1-phosphate guanylyltransferase (471 aa).

This sequence belongs to the mannose-6-phosphate isomerase type 2 family.

It carries out the reaction alpha-D-mannose 1-phosphate + GTP + H(+) = GDP-alpha-D-mannose + diphosphate. It participates in nucleotide-sugar biosynthesis; GDP-alpha-D-mannose biosynthesis; GDP-alpha-D-mannose from alpha-D-mannose 1-phosphate (GTP route): step 1/1. Functionally, involved in GDP-mannose biosynthesis which serves as the activated sugar nucleotide precursor for mannose residues in cell surface polysaccharides. This enzyme participates in synthesis of the LPS O antigen. This chain is Mannose-1-phosphate guanylyltransferase (manC), found in Salmonella montevideo.